A 165-amino-acid polypeptide reads, in one-letter code: uncharacterized protein (165 aa).

Residues 4 to 26 (FVIGTMIALAGLLVGGGVGSYFT) form a helical membrane-spanning segment.

It localises to the membrane. This is an uncharacterized protein from Aquifex aeolicus (strain VF5).